The chain runs to 192 residues: Protein MTH_857 (192 aa).

One can recognise an AMMECR1 domain in the interval 9–192 (DEGRTLVKIA…FQAQIFHEDG (184 aa)).

This Methanothermobacter thermautotrophicus (strain ATCC 29096 / DSM 1053 / JCM 10044 / NBRC 100330 / Delta H) (Methanobacterium thermoautotrophicum) protein is Protein MTH_857.